Consider the following 485-residue polypeptide: MQVTETKSEGLKREFQVVLAAAELEDRLTTELAGMKDKVQLKGFRPGKVPVAHLRRVYGRSIMADVVQNAVNEANQKILEENKLKLALEPQIKMPEDKAEIEKALDAKADLAFQVALEVMPTFELQDHSDITVTKPVATVSDEEVETALKRMAEQSRSYADRPEGSAAETGDRVVIDFVGRIGGETFEGGSAEDADLDLGSNTFIPGFEDQLLGAKAGEARTVTVTFPEGYPAEHLAGKEAVFDVTVKAVKAPGEAQIDDELAKTFGLENLDALKDAVRKSLANELDAQSRRRVKKALLDALDARYAFDLPPTLVHQEFAAVWAQVEADLKSRGKTFEDEGTTEEKAQGEYRRIAERRVRLGLVLAQVGETADIKVPDEEVNQALIARLRQFPGQEREVYDFYRKNPQAMAELRAPLFEEKVVDHVLGQVKLVEEPVSKEALFADDEDEAAEAAAPASEAGASKGVISEGVISEGSAPSHETGAA.

The PPIase FKBP-type domain maps to 171–256 (GDRVVIDFVG…VKAVKAPGEA (86 aa)). Residues 443-485 (FADDEDEAAEAAAPASEAGASKGVISEGVISEGSAPSHETGAA) form a disordered region. Over residues 452–462 (EAAAPASEAGA) the composition is skewed to low complexity.

It belongs to the FKBP-type PPIase family. Tig subfamily.

It localises to the cytoplasm. It carries out the reaction [protein]-peptidylproline (omega=180) = [protein]-peptidylproline (omega=0). Involved in protein export. Acts as a chaperone by maintaining the newly synthesized protein in an open conformation. Functions as a peptidyl-prolyl cis-trans isomerase. This chain is Trigger factor, found in Methylobacterium sp. (strain 4-46).